We begin with the raw amino-acid sequence, 295 residues long: UDP-N-acetylenolpyruvoylglucosamine reductase (295 aa).

Positions 24 to 188 (KVGGDAEIFF…LKAVFKVNKG (165 aa)) constitute an FAD-binding PCMH-type domain. The active site involves arginine 168. Serine 217 serves as the catalytic Proton donor. Residue glutamate 287 is part of the active site.

Belongs to the MurB family. The cofactor is FAD.

It is found in the cytoplasm. It carries out the reaction UDP-N-acetyl-alpha-D-muramate + NADP(+) = UDP-N-acetyl-3-O-(1-carboxyvinyl)-alpha-D-glucosamine + NADPH + H(+). It participates in cell wall biogenesis; peptidoglycan biosynthesis. In terms of biological role, cell wall formation. The polypeptide is UDP-N-acetylenolpyruvoylglucosamine reductase (Rickettsia akari (strain Hartford)).